We begin with the raw amino-acid sequence, 358 residues long: 4-hydroxybenzoate polyprenyltransferase, mitochondrial (358 aa).

The transit peptide at 1-20 directs the protein to the mitochondrion; that stretch reads MIIKPIASPARYFLRTPSWS. The next 7 helical transmembrane spans lie at 76 to 96, 107 to 127, 154 to 174, 202 to 222, 229 to 249, 275 to 295, and 336 to 356; these read TGTY…AYAY, LALF…INDL, AISL…QLNP, VVLG…LAGE, VVAP…TIYA, VLCG…IMNG, and NTGY…SFIY.

This sequence belongs to the UbiA prenyltransferase family. Mg(2+) serves as cofactor.

It is found in the mitochondrion. It localises to the mitochondrion inner membrane. The enzyme catalyses an all-trans-polyprenyl diphosphate + 4-hydroxybenzoate = a 4-hydroxy-3-(all-trans-polyprenyl)benzoate + diphosphate. It functions in the pathway cofactor biosynthesis; ubiquinone biosynthesis. Catalyzes the prenylation of para-hydroxybenzoate (PHB) with an all-trans polyprenyl group. Mediates the second step in the final reaction sequence of coenzyme Q (CoQ) biosynthesis, which is the condensation of the polyisoprenoid side chain with PHB, generating the first membrane-bound Q intermediate. This chain is 4-hydroxybenzoate polyprenyltransferase, mitochondrial, found in Schizosaccharomyces pombe (strain 972 / ATCC 24843) (Fission yeast).